Here is a 189-residue protein sequence, read N- to C-terminus: Crossover junction endodeoxyribonuclease RuvC (189 aa).

Catalysis depends on residues Asp-7, Glu-68, and Asp-141. Mg(2+) contacts are provided by Asp-7, Glu-68, and Asp-141.

The protein belongs to the RuvC family. Homodimer which binds Holliday junction (HJ) DNA. The HJ becomes 2-fold symmetrical on binding to RuvC with unstacked arms; it has a different conformation from HJ DNA in complex with RuvA. In the full resolvosome a probable DNA-RuvA(4)-RuvB(12)-RuvC(2) complex forms which resolves the HJ. Mg(2+) serves as cofactor.

The protein localises to the cytoplasm. It catalyses the reaction Endonucleolytic cleavage at a junction such as a reciprocal single-stranded crossover between two homologous DNA duplexes (Holliday junction).. Its function is as follows. The RuvA-RuvB-RuvC complex processes Holliday junction (HJ) DNA during genetic recombination and DNA repair. Endonuclease that resolves HJ intermediates. Cleaves cruciform DNA by making single-stranded nicks across the HJ at symmetrical positions within the homologous arms, yielding a 5'-phosphate and a 3'-hydroxyl group; requires a central core of homology in the junction. The consensus cleavage sequence is 5'-(A/T)TT(C/G)-3'. Cleavage occurs on the 3'-side of the TT dinucleotide at the point of strand exchange. HJ branch migration catalyzed by RuvA-RuvB allows RuvC to scan DNA until it finds its consensus sequence, where it cleaves and resolves the cruciform DNA. The chain is Crossover junction endodeoxyribonuclease RuvC from Rhodococcus opacus (strain B4).